A 644-amino-acid chain; its full sequence is DNA mismatch repair protein MutL (644 aa).

Residues Glu-336–Glu-400 are disordered. Residues Ser-373–Glu-400 show a composition bias toward basic and acidic residues.

The protein belongs to the DNA mismatch repair MutL/HexB family.

In terms of biological role, this protein is involved in the repair of mismatches in DNA. It is required for dam-dependent methyl-directed DNA mismatch repair. May act as a 'molecular matchmaker', a protein that promotes the formation of a stable complex between two or more DNA-binding proteins in an ATP-dependent manner without itself being part of a final effector complex. The polypeptide is DNA mismatch repair protein MutL (Shewanella sp. (strain MR-7)).